Here is a 174-residue protein sequence, read N- to C-terminus: Nicotinamide-nucleotide adenylyltransferase (174 aa).

It belongs to the archaeal NMN adenylyltransferase family.

It localises to the cytoplasm. It catalyses the reaction beta-nicotinamide D-ribonucleotide + ATP + H(+) = diphosphate + NAD(+). The protein operates within cofactor biosynthesis; NAD(+) biosynthesis; NAD(+) from nicotinamide D-ribonucleotide: step 1/1. In Archaeoglobus fulgidus (strain ATCC 49558 / DSM 4304 / JCM 9628 / NBRC 100126 / VC-16), this protein is Nicotinamide-nucleotide adenylyltransferase.